Reading from the N-terminus, the 261-residue chain is MELNNVILEKEGKVAVVTINRPKALNALNSDTLKEMDYVIGEIENDSEVLAVILTGAGEKSFVAGADISEMKEMNTIEGRKFGILGNKVFRRLELLEKPVIAAVNGFALGGGCEIAMSCDIRIASSNARFGQPEVGLGITPGFGGTQRLSRLVGMGMAKQLIFTAQNIKADEALRIGLVNKVVEPSELMNTAKEIANKIVSNAPVAVKLSKQAINRGMQCDIDTALAFESEAFGECFSTEDQKDAMTAFIEKRKIEGFKNR.

The active-site Nucleophile is the Glu114. Glu134 serves as the catalytic Proton acceptor.

This sequence belongs to the enoyl-CoA hydratase/isomerase family. As to quaternary structure, homotetramer.

It carries out the reaction a short-chain (3S)-3-hydroxyacyl-CoA = a short-chain (2E)-enoyl-CoA + H2O. It functions in the pathway lipid metabolism; butanoate metabolism. In terms of biological role, catalyzes the reversible hydration of crotonyl-CoA. Can also use hexenoyl-CoA but not higher analogs. This is Short-chain-enoyl-CoA hydratase (crt) from Clostridium acetobutylicum (strain ATCC 824 / DSM 792 / JCM 1419 / IAM 19013 / LMG 5710 / NBRC 13948 / NRRL B-527 / VKM B-1787 / 2291 / W).